Here is a 297-residue protein sequence, read N- to C-terminus: Oxidoreductase R1 (297 aa).

This sequence belongs to the asaB hydroxylase/desaturase family.

Its pathway is secondary metabolite biosynthesis. Its function is as follows. Oxidoreductase; part of the gene cluster that mediates the biosynthesis of squalestatin S1 (SQS1, also known as zaragozic acid A), a heavily oxidized fungal polyketide that offers potent cholesterol lowering activity by targeting squalene synthase (SS). SQS1 is composed of a 2,8-dioxobicyclic[3.2.1]octane-3,4,5-tricarboxyclic acid core that is connected to two lipophilic polyketide arms. These initial steps feature the priming of an unusual benzoic acid starter unit onto the highly reducing polyketide synthase pks2, followed by oxaloacetate extension and product release to generate a tricarboxylic acid containing product. The phenylalanine ammonia lyase (PAL) M7 and the acyl-CoA ligase M9 are involved in transforming phenylalanine into benzoyl-CoA. The citrate synthase-like protein R3 is involved in connecting the C-alpha-carbons of the hexaketide chain and oxaloacetate to afford the tricarboxylic acid unit. The potential hydrolytic enzymes, M8 and M10, are in close proximity to pks2 and may participate in product release. On the other side, the tetraketide arm is synthesized by a the squalestatin tetraketide synthase pks1 and enzymatically esterified to the core in the last biosynthetic step, by the acetyltransferase M4. The biosynthesis of the tetraketide must involve 3 rounds of chain extension. After the first and second rounds methyl-transfer occurs, and in all rounds of extension the ketoreductase and dehydratase are active. The enoyl reductase and C-MeT of pks1 are not active in the final round of extension. The acetyltransferase M4 appears to have a broad substrate selectivity for its acyl CoA substrate, allowing the in vitro synthesis of novel squalestatins. The biosynthesis of SQS1 requires several oxidative steps likely performed by oxidoreductases M1, R1 and R2. Finally, in support of the identification of the cluster as being responsible for SQS1 production, the cluster contains a gene encoding a putative squalene synthase (SS) R6, suggesting a likely mechanism for self-resistance. This is Oxidoreductase R1 from Phoma sp. (strain ATCC 20986 / MF5453).